A 276-amino-acid polypeptide reads, in one-letter code: RAB7A-interacting MON1-CCZ1 complex subunit 1 (276 aa).

This sequence belongs to the RIMOC1 family.

It is found in the cytoplasm. The protein resides in the cytosol. Plays an important role in the removal of damaged mitochondria via mitophagy by controlling the stability and localization of RAB7A. Required for the recruitment of RAB7A and ATG9A vesicles to damaged mitochondria and promotes the stability of RAB7A by inhibiting its proteasomal degradation during mitophagy. This chain is RAB7A-interacting MON1-CCZ1 complex subunit 1 (rimoc1), found in Danio rerio (Zebrafish).